The primary structure comprises 297 residues: N-acetylmuramic acid 6-phosphate etherase (297 aa).

Positions 55 to 218 constitute an SIS domain; the sequence is AAAALKSGGR…STGAMVKFGK (164 aa). Catalysis depends on Glu83, which acts as the Proton donor. The active site involves Glu114.

Belongs to the GCKR-like family. MurNAc-6-P etherase subfamily. As to quaternary structure, homodimer.

The enzyme catalyses N-acetyl-D-muramate 6-phosphate + H2O = N-acetyl-D-glucosamine 6-phosphate + (R)-lactate. The protein operates within amino-sugar metabolism; 1,6-anhydro-N-acetylmuramate degradation. Its pathway is amino-sugar metabolism; N-acetylmuramate degradation. It participates in cell wall biogenesis; peptidoglycan recycling. In terms of biological role, specifically catalyzes the cleavage of the D-lactyl ether substituent of MurNAc 6-phosphate, producing GlcNAc 6-phosphate and D-lactate. Together with AnmK, is also required for the utilization of anhydro-N-acetylmuramic acid (anhMurNAc) either imported from the medium or derived from its own cell wall murein, and thus plays a role in cell wall recycling. This is N-acetylmuramic acid 6-phosphate etherase from Salmonella typhi.